The primary structure comprises 201 residues: dCTP deaminase, dUMP-forming (201 aa).

DCTP is bound by residues 101–106, Asp119, 127–129, Gln148, Tyr162, and Gln174; these read KSSLGR and TLE. Glu129 (proton donor/acceptor) is an active-site residue.

It belongs to the dCTP deaminase family. Homotrimer.

It catalyses the reaction dCTP + 2 H2O = dUMP + NH4(+) + diphosphate. It functions in the pathway pyrimidine metabolism; dUMP biosynthesis; dUMP from dCTP: step 1/1. Bifunctional enzyme that catalyzes both the deamination of dCTP to dUTP and the hydrolysis of dUTP to dUMP without releasing the toxic dUTP intermediate. The chain is dCTP deaminase, dUMP-forming from Parafrankia sp. (strain EAN1pec).